The chain runs to 343 residues: Ornithine carbamoyltransferase (343 aa).

Carbamoyl phosphate is bound by residues 62-65, Gln-89, Arg-113, and 140-143; these read STRT and HPTQ. L-ornithine is bound by residues Asn-172, Asp-236, and 240 to 241; that span reads SM. Residues 278-279 and Arg-323 contribute to the carbamoyl phosphate site; that span reads CL.

The protein belongs to the aspartate/ornithine carbamoyltransferase superfamily. OTCase family.

It is found in the cytoplasm. The catalysed reaction is carbamoyl phosphate + L-ornithine = L-citrulline + phosphate + H(+). It functions in the pathway amino-acid degradation; L-arginine degradation via ADI pathway; carbamoyl phosphate from L-arginine: step 2/2. Functionally, reversibly catalyzes the transfer of the carbamoyl group from carbamoyl phosphate (CP) to the N(epsilon) atom of ornithine (ORN) to produce L-citrulline. The polypeptide is Ornithine carbamoyltransferase (Levilactobacillus brevis (strain ATCC 367 / BCRC 12310 / CIP 105137 / JCM 1170 / LMG 11437 / NCIMB 947 / NCTC 947) (Lactobacillus brevis)).